A 392-amino-acid polypeptide reads, in one-letter code: Hercynylcysteine sulfoxide lyase (392 aa).

Lys219 is subject to N6-(pyridoxal phosphate)lysine.

It belongs to the class-V pyridoxal-phosphate-dependent aminotransferase family. EgtE subfamily. The cofactor is pyridoxal 5'-phosphate.

It localises to the cytoplasm. The protein localises to the nucleus. It catalyses the reaction S-(hercyn-2-yl)-L-cysteine S-oxide + AH2 + H(+) = ergothioneine + pyruvate + A + NH4(+). The protein operates within amino-acid biosynthesis; ergothioneine biosynthesis. In terms of biological role, catalyzes the conversion of hercynylcysteine sulfoxide to ergothioneine by cleaving the cysteine residue at the sulfur atom, the last step in the biosynthesis pathway of ergothioneine. This is Hercynylcysteine sulfoxide lyase from Schizosaccharomyces pombe (strain 972 / ATCC 24843) (Fission yeast).